Here is a 491-residue protein sequence, read N- to C-terminus: Glutamyl-tRNA(Gln) amidotransferase subunit A (491 aa).

Active-site charge relay system residues include lysine 76 and serine 154. Serine 178 (acyl-ester intermediate) is an active-site residue.

It belongs to the amidase family. GatA subfamily. As to quaternary structure, heterotrimer of A, B and C subunits.

The enzyme catalyses L-glutamyl-tRNA(Gln) + L-glutamine + ATP + H2O = L-glutaminyl-tRNA(Gln) + L-glutamate + ADP + phosphate + H(+). Allows the formation of correctly charged Gln-tRNA(Gln) through the transamidation of misacylated Glu-tRNA(Gln) in organisms which lack glutaminyl-tRNA synthetase. The reaction takes place in the presence of glutamine and ATP through an activated gamma-phospho-Glu-tRNA(Gln). The protein is Glutamyl-tRNA(Gln) amidotransferase subunit A of Cereibacter sphaeroides (strain ATCC 17025 / ATH 2.4.3) (Rhodobacter sphaeroides).